The sequence spans 525 residues: Ribonuclease Y (525 aa).

The chain crosses the membrane as a helical span at residues 3–23 (IFFISLVLIVLASVVFFVGGF). The KH domain occupies 215–300 (ALSVVHIQSD…KAYEDAKKEI (86 aa)). Residues 341 to 433 (LLQHSREVAM…VDAANVISLS (93 aa)) enclose the HD domain.

It belongs to the RNase Y family.

It localises to the cell membrane. Functionally, endoribonuclease that initiates mRNA decay. This Chlorobium phaeobacteroides (strain DSM 266 / SMG 266 / 2430) protein is Ribonuclease Y.